Here is a 194-residue protein sequence, read N- to C-terminus: Orotate phosphoribosyltransferase (194 aa).

116–124 is a 5-phospho-alpha-D-ribose 1-diphosphate binding site; it reads EDIVTTGLS. Orotate contacts are provided by Thr120 and Arg148.

It belongs to the purine/pyrimidine phosphoribosyltransferase family. PyrE subfamily. Homodimer. Mg(2+) is required as a cofactor.

The enzyme catalyses orotidine 5'-phosphate + diphosphate = orotate + 5-phospho-alpha-D-ribose 1-diphosphate. It participates in pyrimidine metabolism; UMP biosynthesis via de novo pathway; UMP from orotate: step 1/2. Catalyzes the transfer of a ribosyl phosphate group from 5-phosphoribose 1-diphosphate to orotate, leading to the formation of orotidine monophosphate (OMP). The sequence is that of Orotate phosphoribosyltransferase from Caulobacter vibrioides (strain ATCC 19089 / CIP 103742 / CB 15) (Caulobacter crescentus).